Here is a 220-residue protein sequence, read N- to C-terminus: Ribose-5-phosphate isomerase A (220 aa).

Substrate-binding positions include 25 to 28, 80 to 83, and 93 to 96; these read TGST, DGAD, and KGGG. Glutamate 102 acts as the Proton acceptor in catalysis. Residue lysine 120 participates in substrate binding.

This sequence belongs to the ribose 5-phosphate isomerase family. As to quaternary structure, homodimer.

It carries out the reaction aldehydo-D-ribose 5-phosphate = D-ribulose 5-phosphate. It participates in carbohydrate degradation; pentose phosphate pathway; D-ribose 5-phosphate from D-ribulose 5-phosphate (non-oxidative stage): step 1/1. Functionally, catalyzes the reversible conversion of ribose-5-phosphate to ribulose 5-phosphate. The protein is Ribose-5-phosphate isomerase A of Bacillus cereus (strain ZK / E33L).